The following is a 169-amino-acid chain: uncharacterized protein (169 aa).

S165 carries the post-translational modification Phosphoserine.

This is an uncharacterized protein from Drosophila melanogaster (Fruit fly).